Reading from the N-terminus, the 381-residue chain is 3-dehydroquinate synthase (381 aa).

Residues 81-86, 115-119, 139-140, K152, and K161 each bind NAD(+); these read EGESSK, GVIGD, and TS. 3 residues coordinate Zn(2+): E194, H256, and H274.

The protein belongs to the sugar phosphate cyclases superfamily. Dehydroquinate synthase family. The cofactor is Co(2+). Zn(2+) serves as cofactor. Requires NAD(+) as cofactor.

The protein localises to the cytoplasm. The enzyme catalyses 7-phospho-2-dehydro-3-deoxy-D-arabino-heptonate = 3-dehydroquinate + phosphate. Its pathway is metabolic intermediate biosynthesis; chorismate biosynthesis; chorismate from D-erythrose 4-phosphate and phosphoenolpyruvate: step 2/7. Functionally, catalyzes the conversion of 3-deoxy-D-arabino-heptulosonate 7-phosphate (DAHP) to dehydroquinate (DHQ). The sequence is that of 3-dehydroquinate synthase from Rhodopseudomonas palustris (strain ATCC BAA-98 / CGA009).